The sequence spans 279 residues: ATP synthase gamma chain (279 aa).

It belongs to the ATPase gamma chain family. As to quaternary structure, F-type ATPases have 2 components, CF(1) - the catalytic core - and CF(0) - the membrane proton channel. CF(1) has five subunits: alpha(3), beta(3), gamma(1), delta(1), epsilon(1). CF(0) has three main subunits: a, b and c.

The protein resides in the cell membrane. Its function is as follows. Produces ATP from ADP in the presence of a proton gradient across the membrane. The gamma chain is believed to be important in regulating ATPase activity and the flow of protons through the CF(0) complex. The protein is ATP synthase gamma chain of Mycoplasmopsis pulmonis (strain UAB CTIP) (Mycoplasma pulmonis).